Consider the following 208-residue polypeptide: Outer-membrane lipoprotein carrier protein (208 aa).

Residues 1 to 23 form the signal peptide; sequence MKKTVKNLTALLTLALAAPWALA.

This sequence belongs to the LolA family. In terms of assembly, monomer.

It localises to the periplasm. In terms of biological role, participates in the translocation of lipoproteins from the inner membrane to the outer membrane. Only forms a complex with a lipoprotein if the residue after the N-terminal Cys is not an aspartate (The Asp acts as a targeting signal to indicate that the lipoprotein should stay in the inner membrane). In Actinobacillus succinogenes (strain ATCC 55618 / DSM 22257 / CCUG 43843 / 130Z), this protein is Outer-membrane lipoprotein carrier protein.